A 210-amino-acid polypeptide reads, in one-letter code: Uridine kinase (210 aa).

12 to 19 (GGSGGGKT) contributes to the ATP binding site.

The protein belongs to the uridine kinase family.

The protein localises to the cytoplasm. It catalyses the reaction uridine + ATP = UMP + ADP + H(+). The catalysed reaction is cytidine + ATP = CMP + ADP + H(+). The protein operates within pyrimidine metabolism; CTP biosynthesis via salvage pathway; CTP from cytidine: step 1/3. It participates in pyrimidine metabolism; UMP biosynthesis via salvage pathway; UMP from uridine: step 1/1. In Streptococcus gordonii (strain Challis / ATCC 35105 / BCRC 15272 / CH1 / DL1 / V288), this protein is Uridine kinase.